Consider the following 252-residue polypeptide: Small ribosomal subunit protein uS3 (252 aa).

The region spanning 39 to 110 is the KH type-2 domain; it reads IRKALMKELK…EVKINVVEIK (72 aa). The disordered stretch occupies residues 218–252; that stretch reads TSDEKPKFEKRDFNRSNNNRRDQAPKSHPVAKEAK. The span at 219–252 shows a compositional bias: basic and acidic residues; it reads SDEKPKFEKRDFNRSNNNRRDQAPKSHPVAKEAK.

The protein belongs to the universal ribosomal protein uS3 family. Part of the 30S ribosomal subunit. Forms a tight complex with proteins S10 and S14.

Functionally, binds the lower part of the 30S subunit head. Binds mRNA in the 70S ribosome, positioning it for translation. This is Small ribosomal subunit protein uS3 from Spiroplasma citri.